An 899-amino-acid chain; its full sequence is MKLSPPASADMPQALPENDGEQRCLNSELWHACAGPLVSLPVVRSRVVYFPQGHSEQVAASTNKEVDAQIPNYPNLPPQLICQLHNVTMHADAETDEVYAQMTLQPLSPEEQKEPFLPMELGAASKQPTNYFCKTLTASDTSTHGGFSVPRRAAEKVFPPLDFSQQPPAQELIARDLHDNEWKFRHIFRGQPKRHLLTTGWSVFVSAKRLVAGDSVIFIWNDNNQLLLGIRRANRQQTVMPSSVLSSDSMHIGLLAAAAHAAATNSRFTIFYNPRASPSEFVIPLAKYVKAVYHTRVSVGMRFRMLFETEESSVRRYMGTITSISDLDSVRWPNSHWRSVKVGWDESTTGDKQPRVSLWEIEPLTTFPMYPSAFPLRLKRPWASGLPMHGMFNGGGNDDFARYSSLMWLRDGNRGTQSLNFQGHGVSPWLQPRIDSPLLGLKPDTYQQMAAAALEEIRYGDPSKQHPATLQYQQTHNLNSGLNSLFASHVLGQVQFQPQQSPLQVVQQGHCQNTGDSGFLQGQLPRLQLHNTQQLLKEQELQQQQRQHVLQEQSSQEMQQQLPSSDHHVADVASESGSAPQAQSSLLSGSSFYNQNLLEGNSDPPLHLHNNFHNFSNQEASNLLILPRSSQLMASDGWPSKRLTLESAVHPEAPSMHPKIEKVNHQGISHFPGAFPPQSARGCSIVQDCRADAENRLLSSSFELQDGMTSIITDANRETDTMAIPLLRYSGADLTTENTLATSNCLGESGTFNPLNNISVNPSQGATFVKVYKSGSLGRSLDISRFSSYCELRSELERLFGLEGQLEDPVRSGWQLVFVDRENDILLVGDDPWQEFANSVWCIKILSPQEVQQLVRGGDGLLSSPGARMQQSNACDDYSASHNMQNIAGNIASVAPLDY.

The disordered stretch occupies residues 1–20; it reads MKLSPPASADMPQALPENDG. A DNA-binding region (TF-B3) is located at residues 132–234; the sequence is FCKTLTASDT…QLLLGIRRAN (103 aa). Low complexity predominate over residues 546 to 564; that stretch reads RQHVLQEQSSQEMQQQLPS. The disordered stretch occupies residues 546 to 586; it reads RQHVLQEQSSQEMQQQLPSSDHHVADVASESGSAPQAQSSL. Residues 575–586 show a composition bias toward polar residues; the sequence is ESGSAPQAQSSL. The PB1 domain occupies 766-850; sequence ATFVKVYKSG…WCIKILSPQE (85 aa).

Belongs to the ARF family. As to quaternary structure, homodimers and heterodimers. As to expression, expressed in roots, culms, leaves and young panicles.

It localises to the nucleus. Auxin response factors (ARFs) are transcriptional factors that bind specifically to the DNA sequence 5'-TGTCTC-3' found in the auxin-responsive promoter elements (AuxREs). This Oryza sativa subsp. japonica (Rice) protein is Auxin response factor 25 (ARF25).